Reading from the N-terminus, the 93-residue chain is Neutrophil cationic peptide 2 (93 aa).

An N-terminal signal peptide occupies residues 1-19; it reads MRTVPLFAACLLLTLMAQA. Positions 20–62 are excised as a propeptide; sequence EPLPRAADHSDTKMKGDREDHVAVISFWEEESTSLQDAGAGAG. 3 disulfide bridges follow: Cys-65–Cys-93, Cys-67–Cys-82, and Cys-72–Cys-92.

The protein belongs to the alpha-defensin family.

It localises to the secreted. Has antibiotic, anti-fungi and antiviral activity. This chain is Neutrophil cationic peptide 2, found in Cavia porcellus (Guinea pig).